Consider the following 481-residue polypeptide: Sterol 14-alpha demethylase (481 aa).

A helical membrane pass occupies residues 1–21; the sequence is MFIEAIVLALTALILYSVYSV. Position 422 (cysteine 422) interacts with heme.

This sequence belongs to the cytochrome P450 family. Requires heme as cofactor.

The protein resides in the membrane. The catalysed reaction is a 14alpha-methyl steroid + 3 reduced [NADPH--hemoprotein reductase] + 3 O2 = a Delta(14) steroid + formate + 3 oxidized [NADPH--hemoprotein reductase] + 4 H2O + 4 H(+). It functions in the pathway steroid biosynthesis; zymosterol biosynthesis; zymosterol from lanosterol: step 1/6. Its function is as follows. Catalyzes C14-demethylation of lanosterol which is critical for ergosterol biosynthesis. It transforms lanosterol into 4,4'-dimethyl cholesta-8,14,24-triene-3-beta-ol. Favors C4 dimethylated substrates, the substrate preference order is 24-methylenedihydrolanosterol &gt; 24,25-dihydrolanosterol &gt; lanosterol &gt; obtusifoliol &gt; norlanosterol. This Trypanosoma cruzi (strain CL Brener) protein is Sterol 14-alpha demethylase.